The following is a 235-amino-acid chain: Small ribosomal subunit protein eS4 (235 aa).

Residues 38–101 form the S4 RNA-binding domain; the sequence is IPLLVLVRDF…EKSYRILFDE (64 aa).

The protein belongs to the eukaryotic ribosomal protein eS4 family.

This chain is Small ribosomal subunit protein eS4 (rps4e), found in Archaeoglobus fulgidus (strain ATCC 49558 / DSM 4304 / JCM 9628 / NBRC 100126 / VC-16).